The chain runs to 259 residues: MRVLVSNDDGVDAPGIQVLAEALRHAGHEVMVVAPDRDRSGASNSLTLDVPIRTRRIDAQTCAVAGTPTDCVHLALTGMLDYDPDIVVSGINNSANLGDDVIYSGTVSAAMEGRFLGLPAVAVSLVTHNHQAHNYDTAARAAVEIVARLKADPLPADTILNVNVPDLAWSDVLGFEVTRLGNRHRSEPCVPQRDPRGHTVYWIGPAGPEQDAGAGTDFHAVRTGHISITPIHVDLTRYQALDTVAGWVGGLTAALDGPA.

The a divalent metal cation site is built by Asp-8, Asp-9, Ser-40, and Asn-92.

Belongs to the SurE nucleotidase family. A divalent metal cation is required as a cofactor.

The protein localises to the cytoplasm. It catalyses the reaction a ribonucleoside 5'-phosphate + H2O = a ribonucleoside + phosphate. In terms of biological role, nucleotidase that shows phosphatase activity on nucleoside 5'-monophosphates. This Xanthomonas axonopodis pv. citri (strain 306) protein is 5'-nucleotidase SurE.